Here is a 390-residue protein sequence, read N- to C-terminus: GTPase Obg (390 aa).

One can recognise an Obg domain in the interval 1-159; the sequence is MKFVDEAAIL…RDILLELLLL (159 aa). In terms of domain architecture, OBG-type G spans 160-333; sequence ADVGMLGLPN…LCWDVMKFIN (174 aa). Residues 166-173, 191-195, 213-216, 283-286, and 314-316 each bind GTP; these read GLPNAGKS, FTTLV, DIPG, NKID, and SAV. 2 residues coordinate Mg(2+): S173 and T193. Residues 366 to 384 are compositionally biased toward acidic residues; that stretch reads AEADDDWDDDWDEEDDEGV. A disordered region spans residues 366–390; that stretch reads AEADDDWDDDWDEEDDEGVEIIYQK.

This sequence belongs to the TRAFAC class OBG-HflX-like GTPase superfamily. OBG GTPase family. In terms of assembly, monomer. It depends on Mg(2+) as a cofactor.

The protein resides in the cytoplasm. In terms of biological role, an essential GTPase which binds GTP, GDP and possibly (p)ppGpp with moderate affinity, with high nucleotide exchange rates and a fairly low GTP hydrolysis rate. Plays a role in control of the cell cycle, stress response, ribosome biogenesis and in those bacteria that undergo differentiation, in morphogenesis control. This Serratia proteamaculans (strain 568) protein is GTPase Obg.